Here is a 296-residue protein sequence, read N- to C-terminus: uncharacterized protein (296 aa).

The chain crosses the membrane as a helical span at residues M1–F21.

The protein resides in the membrane. This is an uncharacterized protein from Caenorhabditis elegans.